The sequence spans 838 residues: Envelope glycoprotein H (838 aa).

Residues Met1 to Gly18 form the signal peptide. The Virion surface segment spans residues Gln19–Pro803. N-linked (GlcNAc...) asparagine; by host glycosylation is found at Asn73 and Asn120. The interval Phe174 to His204 is disordered. A glycan (N-linked (GlcNAc...) asparagine; by host) is linked at Asn216. The interaction with gL stretch occupies residues Asp259–Val323. 4 N-linked (GlcNAc...) asparagine; by host glycosylation sites follow: Asn332, Asn437, Asn670, and Asn784. The chain crosses the membrane as a helical span at residues Gly804–Leu824. Residues Lys825–Glu838 lie on the Intravirion side of the membrane.

This sequence belongs to the herpesviridae glycoprotein H family. In terms of assembly, interacts with glycoprotein L (gL); this interaction is necessary for the correct processing and cell surface expression of gH. The heterodimer gH/gL seems to interact with gB trimers during fusion. In terms of processing, N-glycosylated, O-glycosylated, and sialylated.

The protein localises to the virion membrane. The protein resides in the host cell membrane. It is found in the host endosome membrane. In terms of biological role, the heterodimer glycoprotein H-glycoprotein L is required for the fusion of viral and plasma membranes leading to virus entry into the host cell. Following initial binding to host receptor, membrane fusion is mediated by the fusion machinery composed of gB and the heterodimer gH/gL. May also be involved in the fusion between the virion envelope and the outer nuclear membrane during virion morphogenesis. The polypeptide is Envelope glycoprotein H (Homo sapiens (Human)).